The chain runs to 156 residues: Small ribosomal subunit protein uS7 (156 aa).

Belongs to the universal ribosomal protein uS7 family. As to quaternary structure, part of the 30S ribosomal subunit. Contacts proteins S9 and S11.

Functionally, one of the primary rRNA binding proteins, it binds directly to 16S rRNA where it nucleates assembly of the head domain of the 30S subunit. Is located at the subunit interface close to the decoding center, probably blocks exit of the E-site tRNA. In Synechococcus elongatus (strain ATCC 33912 / PCC 7942 / FACHB-805) (Anacystis nidulans R2), this protein is Small ribosomal subunit protein uS7.